The primary structure comprises 751 residues: Translation initiation factor IF-2, chloroplastic (751 aa).

The tract at residues 86–156 is disordered; that stretch reads KKEKSKFRKD…KSKKQTSAKN (71 aa). A compositionally biased stretch (basic and acidic residues) spans 93–106; it reads RKDEDYDSLKREDN. The segment covering 129–143 has biased composition (low complexity); that stretch reads VSNTNTLNKKNVVKS. The tr-type G domain occupies 250–423; it reads KRPPVIAIMG…ILVSEIEDLK (174 aa). Positions 259–266 are G1; sequence GHVDHGKT. 259–266 contributes to the GTP binding site; the sequence is GHVDHGKT. The segment at 284–288 is G2; sequence GITQK. Residues 309 to 312 are G3; the sequence is DTPG. GTP is bound by residues 309–313 and 363–366; these read DTPGH and NKID. The interval 363–366 is G4; the sequence is NKID. Residues 399-401 are G5; it reads SAM.

Belongs to the TRAFAC class translation factor GTPase superfamily. Classic translation factor GTPase family. IF-2 subfamily.

The protein resides in the plastid. The protein localises to the chloroplast. Functionally, one of the essential components for the initiation of protein synthesis. Protects formylmethionyl-tRNA from spontaneous hydrolysis and promotes its binding to the 30S ribosomal subunits. Also involved in the hydrolysis of GTP during the formation of the 70S ribosomal complex. The protein is Translation initiation factor IF-2, chloroplastic (infB) of Rhodomonas salina (Cryptomonas salina).